A 297-amino-acid polypeptide reads, in one-letter code: 4-hydroxy-tetrahydrodipicolinate synthase (297 aa).

Threonine 50 is a pyruvate binding site. Tyrosine 138 functions as the Proton donor/acceptor in the catalytic mechanism. Lysine 166 serves as the catalytic Schiff-base intermediate with substrate. Isoleucine 208 provides a ligand contact to pyruvate.

Belongs to the DapA family. As to quaternary structure, homotetramer; dimer of dimers.

It localises to the cytoplasm. It carries out the reaction L-aspartate 4-semialdehyde + pyruvate = (2S,4S)-4-hydroxy-2,3,4,5-tetrahydrodipicolinate + H2O + H(+). It functions in the pathway amino-acid biosynthesis; L-lysine biosynthesis via DAP pathway; (S)-tetrahydrodipicolinate from L-aspartate: step 3/4. Catalyzes the condensation of (S)-aspartate-beta-semialdehyde [(S)-ASA] and pyruvate to 4-hydroxy-tetrahydrodipicolinate (HTPA). The sequence is that of 4-hydroxy-tetrahydrodipicolinate synthase from Haemophilus ducreyi (strain 35000HP / ATCC 700724).